A 351-amino-acid polypeptide reads, in one-letter code: N(4)-bis(aminopropyl)spermidine synthase (351 aa).

This sequence belongs to the branched-chain polyamine synthase family.

It localises to the cytoplasm. It catalyses the reaction 2 S-adenosyl 3-(methylsulfanyl)propylamine + spermidine = N(4)-bis(aminopropyl)spermidine + 2 S-methyl-5'-thioadenosine + 2 H(+). Its pathway is amine and polyamine biosynthesis. Involved in the biosynthesis of branched-chain polyamines, which support the growth of thermophiles under high-temperature conditions. Catalyzes the sequential condensation of spermidine with the aminopropyl groups of decarboxylated S-adenosylmethionines to produce N(4)-bis(aminopropyl)spermidine via N(4)-aminopropylspermidine. Can also use spermine to produce N(4)-aminopropylspermine. In Thermococcus kodakarensis (strain ATCC BAA-918 / JCM 12380 / KOD1) (Pyrococcus kodakaraensis (strain KOD1)), this protein is N(4)-bis(aminopropyl)spermidine synthase.